The sequence spans 244 residues: 14-3-3 protein beta/alpha (244 aa).

The residue at position 1 (methionine 1) is an N-acetylmethionine.

It belongs to the 14-3-3 family. As to quaternary structure, homodimer, and heterodimer with other family members.

Its subcellular location is the cytoplasm. In terms of biological role, adapter protein implicated in the regulation of a large spectrum of both general and specialized signaling pathways. Binds to a large number of partners, usually by recognition of a phosphoserine or phosphothreonine motif. Binding generally results in the modulation of the activity of the binding partner. This Xenopus tropicalis (Western clawed frog) protein is 14-3-3 protein beta/alpha (ywhab).